Reading from the N-terminus, the 317-residue chain is Olfactory receptor 51Q1 (317 aa).

Topologically, residues 1–27 (MSQVTNTTQEGIYFILTDIPGFEASHI) are extracellular. A glycan (N-linked (GlcNAc...) asparagine) is linked at Asn6. Residues 28–48 (WISIPVCCLYTISIMGNTTIL) traverse the membrane as a helical segment. Residues 49–56 (TVIRTEPS) are Cytoplasmic-facing. The helical transmembrane segment at 57–77 (VHQRMYLFLSMLALTDLGLTL) threads the bilayer. The Extracellular portion of the chain corresponds to 78 to 101 (TTLPTVMQLLWFNVRRISSEACFA). A disulfide bond links Cys99 and Cys191. Residues 102–122 (QFFFLHGFSFMESSVLLAMSV) form a helical membrane-spanning segment. Topologically, residues 123–141 (DCYVAICCPLHYASILTNE) are cytoplasmic. A helical membrane pass occupies residues 142-162 (VIGRTGLAIICCCVLAVLPSL). The Extracellular portion of the chain corresponds to 163 to 198 (FLLKRLPFCHSHLLSRSYCLHQDMIRLVCADIRLNS). A helical membrane pass occupies residues 199-219 (WYGFALALLIIIVDPLLIVIS). At 220–239 (YTLILKNILGTATWAERLRA) the chain is on the cytoplasmic side. Residues 240 to 260 (LNNCLSHILAVLVLYIPMVGV) form a helical membrane-spanning segment. The Extracellular segment spans residues 261-275 (SMTHRFAKHASPLVH). A helical membrane pass occupies residues 276–296 (VIMANIYLLAPPVMNPIIYSV). Topologically, residues 297-317 (KNKQIQWGMLNFLSLKNMHSR) are cytoplasmic.

Belongs to the G-protein coupled receptor 1 family.

The protein resides in the cell membrane. Functionally, odorant receptor. The sequence is that of Olfactory receptor 51Q1 (OR51Q1) from Homo sapiens (Human).